The following is a 2471-amino-acid chain: Neurogenic locus notch homolog protein 2 (2471 aa).

A signal peptide spans 1-25 (MPALRPALLWALLALWLCCAAPAHA). 4 consecutive EGF-like domains span residues 26–63 (LQCR…EYCQ), 64–102 (HRDP…EDCQ), 105–143 (TSHP…KECQ), and 144–180 (WTDA…QKCE). Over 26 to 1677 (LQCRDGYEPC…SESLTPERTQ (1652 aa)) the chain is Extracellular. 84 disulfides stabilise this stretch: C28-C41, C35-C51, C53-C62, C68-C79, C73-C90, C92-C101, C109-C121, C115-C131, C133-C142, C148-C159, C153-C168, C170-C179, C186-C198, C192-C207, C209-C218, C225-C236, C230-C246, C248-C257, C264-C275, C269-C284, C286-C295, C302-C315, C309-C324, C326-C335, C342-C353, C347-C362, C364-C373, C379-C390, C384-C401, C403-C412, C419-C433, C427-C442, C444-C453, C460-C471, C465-C480, C482-C491, C498-C509, C503-C518, C520-C529, C536-C547, C541-C556, C558-C567, C574-C584, C579-C593, C595-C604, C611-C622, C616-C631, C633-C642, C649-C659, C654-C668, C670-C679, C686-C697, C691-C706, C708-C717, C724-C734, C729-C743, C745-C754, C761-C772, C766-C781, C783-C792, C799-C810, C804-C819, C821-C830, C837-C848, C842-C859, C861-C870, C877-C888, C882-C897, C899-C908, C915-C926, C920-C935, C937-C946, C953-C964, C958-C973, C975-C984, C991-C1002, C996-C1011, C1013-C1022, C1029-C1040, C1034-C1049, C1051-C1060, C1067-C1078, C1072-C1087, and C1089-C1098. The N-linked (GlcNAc...) asparagine glycan is linked to N46. A glycan (N-linked (GlcNAc...) asparagine) is linked at N155. The EGF-like 5; calcium-binding domain maps to 182 to 219 (DVNECDIPGHCQHGGTCLNLPGSYQCQCPQGFTGQYCD). Positions 221 to 258 (LYVPCAPSPCVNGGTCRQTGDFTFECNCLPGFEGSTCE) constitute an EGF-like 6 domain. One can recognise an EGF-like 7; calcium-binding domain in the interval 260–296 (NIDDCPNHRCQNGGVCVDGVNTYNCRCPPQWTGQFCT). The region spanning 298–336 (DVDECLLQPNACQNGGTCANRNGGYGCVCVNGWSGDDCS) is the EGF-like 8; calcium-binding domain. The EGF-like 9; calcium-binding domain maps to 338 to 374 (NIDDCAFASCTPGSTCIDRVASFSCMCPEGKAGLLCH). The EGF-like 10 domain maps to 375–413 (LDDACISNPCHKGALCDTNPLNGQYICTCPQGYKGADCT). The EGF-like 11; calcium-binding domain occupies 415–454 (DVDECAMANSNPCEHAGKCVNTDGAFHCECLKGYAGPRCE). The EGF-like 12; calcium-binding domain occupies 456–492 (DINECHSDPCQNDATCLDKIGGFTCLCMPGFKGVHCE). The 37-residue stretch at 494–530 (EINECQSNPCVNNGQCVDKVNRFQCLCPPGFTGPVCQ) folds into the EGF-like 13; calcium-binding domain. The EGF-like 14; calcium-binding domain maps to 532–568 (DIDDCSSTPCLNGAKCIDHPNGYECQCATGFTGVLCE). Residues 570–605 (NIDNCDPDPCHHGQCQDGIDSYTCICNPGYMGAICS) enclose the EGF-like 15; calcium-binding domain. Residues 607-643 (QIDECYSSPCLNDGRCIDLVNGYQCNCQPGTSGVNCE) enclose the EGF-like 16; calcium-binding domain. The O-linked (Glc...) serine; alternate glycan is linked to S613. O-linked (Xyl...) serine; alternate glycosylation occurs at S613. One can recognise an EGF-like 17; calcium-binding domain in the interval 645–680 (NFDDCASNPCIHGICMDGINRYSCVCSPGFTGQRCN). The EGF-like 18; calcium-binding domain occupies 682–718 (DIDECASNPCRKGATCINGVNGFRCICPEGPHHPSCY). One can recognise an EGF-like 19 domain in the interval 720-755 (QVNECLSNPCIHGNCTGGLSGYKCLCDAGWVGINCE). N-linked (GlcNAc...) asparagine glycosylation is present at N733. Residues 757-793 (DKNECLSNPCQNGGTCDNLVNGYRCTCKKGFKGYNCQ) form the EGF-like 20; calcium-binding domain. One can recognise an EGF-like 21; calcium-binding domain in the interval 795–831 (NIDECASNPCLNQGTCFDDISGYTCHCVLPYTGKNCQ). The 39-residue stretch at 833–871 (VLAPCSPNPCENAAVCKESPNFESYTCLCAPGWQGQRCT) folds into the EGF-like 22 domain. The 37-residue stretch at 873–909 (DIDECISKPCMNHGLCHNTQGSYMCECPPGFSGMDCE) folds into the EGF-like 23; calcium-binding domain. The EGF-like 24; calcium-binding domain maps to 911–947 (DIDDCLANPCQNGGSCMDGVNTFSCLCLPGFTGDKCQ). The EGF-like 25; calcium-binding domain maps to 949–985 (DMNECLSEPCKNGGTCSDYVNSYTCKCQAGFDGVHCE). The 37-residue stretch at 987-1023 (NINECTESSCFNGGTCVDGINSFSCLCPVGFTGSFCL) folds into the EGF-like 26; calcium-binding domain. The 37-residue stretch at 1025–1061 (EINECSSHPCLNEGTCVDGLGTYRCSCPLGYTGKNCQ) folds into the EGF-like 27; calcium-binding domain. 2 consecutive EGF-like domains span residues 1063 to 1099 (LVNL…AYCD) and 1101 to 1147 (PNVS…SYCE). Residue N1102 is glycosylated (N-linked (GlcNAc...) asparagine). 24 disulfides stabilise this stretch: C1105–C1126, C1120–C1135, C1137–C1146, C1153–C1164, C1158–C1173, C1175–C1184, C1191–C1202, C1196–C1211, C1213–C1222, C1229–C1241, C1235–C1250, C1252–C1261, C1268–C1281, C1273–C1290, C1292–C1301, C1308–C1319, C1313–C1331, C1333–C1342, C1378–C1389, C1383–C1400, C1402–C1411, C1425–C1448, C1430–C1443, and C1439–C1455. In terms of domain architecture, EGF-like 30; calcium-binding spans 1149-1185 (QLDECASNPCQHGATCSDFIGGYRCECVPGYQGVNCE). Positions 1187–1223 (EVDECQNQPCQNGGTCIDLVNHFKCSCPPGTRGLLCE) constitute an EGF-like 31; calcium-binding domain. Residues 1225–1262 (NIDDCARGPHCLNGGQCMDRIGGYSCRCLPGFAGERCE) enclose the EGF-like 32; calcium-binding domain. EGF-like domains follow at residues 1264-1302 (DINE…RHCE), 1304-1343 (FVDV…ARCQ), and 1374-1412 (CESG…SRCE). 3 LNR repeats span residues 1425–1465 (CLSQ…PWAN), 1466–1502 (CSSP…NSKT), and 1503–1544 (CKYD…NLAE). The negative regulatory region (NRR) stretch occupies residues 1425 to 1677 (CLSQYCADKA…SESLTPERTQ (253 aa)). N1465 carries an N-linked (GlcNAc...) asparagine glycan. Intrachain disulfides connect C1466–C1489, C1472–C1484, C1480–C1496, C1503–C1527, C1509–C1522, C1518–C1534, and C1632–C1639. The chain crosses the membrane as a helical span at residues 1678–1698 (LLYLLAVAVVIILFIILLGVI). Topologically, residues 1699–2471 (MAKRKRKHGS…PPHNNMQVYA (773 aa)) are cytoplasmic. A Phosphothreonine modification is found at T1716. The tract at residues 1754–1788 (TSEHWVDDEGPQPKKVKAEDEALLSEEDDPIDRRP) is disordered. Acidic residues predominate over residues 1774–1783 (EALLSEEDDP). Residue S1778 is modified to Phosphoserine. T1802 carries the phosphothreonine modification. Position 1804 is a phosphoserine (S1804). T1808 is modified (phosphothreonine). ANK repeat units follow at residues 1827 to 1871 (DGCT…SLQA), 1876 to 1905 (TGEM…DANA), 1909 to 1939 (MGRC…DLDA), 1943 to 1972 (DGTT…DVNA), 1976 to 2005 (HGKS…NRDM), and 2009 to 2038 (KEET…NRDI). Phosphoserine occurs at positions 1842 and 1845. S2070, S2078, and S2081 each carry phosphoserine. 2 disordered regions span residues 2091–2168 (FLSL…TSSP) and 2380–2471 (VGKY…QVYA). T2097 carries the phosphothreonine modification. Over residues 2098 to 2107 (PMGKKSRRPS) the composition is skewed to basic residues. Polar residues-rich tracts occupy residues 2108-2117 (AKSTMPTSLP), 2137-2150 (EKVQ…TLSP), 2159-2168 (TYVSDTTSSP), and 2388-2406 (SQHS…SHSG). The span at 2417–2445 (PSPESPDQWSSSSPHSASDWSDVTTSPTP) shows a compositional bias: low complexity.

It belongs to the NOTCH family. Heterodimer of a C-terminal fragment N(TM) and an N-terminal fragment N(EC) which are probably linked by disulfide bonds. Interacts with MAML1, MAML2 and MAML3 which act as transcriptional coactivators for NOTCH2. Interacts with RELA/p65. Interacts with HIF1AN. Interacts (via ANK repeats) with TCIM, the interaction inhibits the nuclear translocation of NOTCH2 N2ICD. Interacts with CUL1, RBX1, SKP1 and FBXW7 that are SCF(FBXW7) E3 ubiquitin-protein ligase complex components. Interacts with MINAR1; this interaction increases MINAR1 stability and function. Interacts with NOTCH2NL (NOTCH2NLA, NOTCH2NLB and/or NOTCH2NLC); leading to enhance Notch signaling pathway in a non-cell-autonomous manner. Interacts with MDK; this interaction mediates a nuclear accumulation of NOTCH2 and therefore activation of NOTCH2 signaling leading to interaction between HES1 and STAT3. Interacts with MINAR2. Synthesized in the endoplasmic reticulum as an inactive form which is proteolytically cleaved by a furin-like convertase in the trans-Golgi network before it reaches the plasma membrane to yield an active, ligand-accessible form. Cleavage results in a C-terminal fragment N(TM) and a N-terminal fragment N(EC). Following ligand binding, it is cleaved by TNF-alpha converting enzyme (TACE) to yield a membrane-associated intermediate fragment called notch extracellular truncation (NEXT). This fragment is then cleaved by presenilin dependent gamma-secretase to release a notch-derived peptide containing the intracellular domain (NICD) from the membrane. Post-translationally, hydroxylated by HIF1AN. In terms of processing, can be either O-glucosylated or O-xylosylated at Ser-613 by POGLUT1. Phosphorylated by GSK3. GSK3-mediated phosphorylation is necessary for NOTCH2 recognition by FBXW7, ubiquitination and degradation via the ubiquitin proteasome pathway. In terms of tissue distribution, expressed in the brain, heart, kidney, lung, skeletal muscle and liver. Ubiquitously expressed in the embryo.

Its subcellular location is the cell membrane. The protein resides in the nucleus. It localises to the cytoplasm. Functions as a receptor for membrane-bound ligands Jagged-1 (JAG1), Jagged-2 (JAG2) and Delta-1 (DLL1) to regulate cell-fate determination. Upon ligand activation through the released notch intracellular domain (NICD) it forms a transcriptional activator complex with RBPJ/RBPSUH and activates genes of the enhancer of split locus. Affects the implementation of differentiation, proliferation and apoptotic programs. Involved in bone remodeling and homeostasis. In collaboration with RELA/p65 enhances NFATc1 promoter activity and positively regulates RANKL-induced osteoclast differentiation. Positively regulates self-renewal of liver cancer cells. The chain is Neurogenic locus notch homolog protein 2 from Homo sapiens (Human).